Reading from the N-terminus, the 196-residue chain is ATP-dependent Clp protease proteolytic subunit (196 aa).

Ser96 acts as the Nucleophile in catalysis. His121 is a catalytic residue.

This sequence belongs to the peptidase S14 family. As to quaternary structure, fourteen ClpP subunits assemble into 2 heptameric rings which stack back to back to give a disk-like structure with a central cavity, resembling the structure of eukaryotic proteasomes.

It is found in the cytoplasm. It catalyses the reaction Hydrolysis of proteins to small peptides in the presence of ATP and magnesium. alpha-casein is the usual test substrate. In the absence of ATP, only oligopeptides shorter than five residues are hydrolyzed (such as succinyl-Leu-Tyr-|-NHMec, and Leu-Tyr-Leu-|-Tyr-Trp, in which cleavage of the -Tyr-|-Leu- and -Tyr-|-Trp bonds also occurs).. Functionally, cleaves peptides in various proteins in a process that requires ATP hydrolysis. Has a chymotrypsin-like activity. Plays a major role in the degradation of misfolded proteins. This is ATP-dependent Clp protease proteolytic subunit from Streptococcus equi subsp. zooepidemicus (strain H70).